A 184-amino-acid polypeptide reads, in one-letter code: Peptide deformylase 2 (184 aa).

Fe cation-binding residues include C110 and H153. E154 is a catalytic residue. H157 contributes to the Fe cation binding site.

Belongs to the polypeptide deformylase family. Requires Fe(2+) as cofactor.

The catalysed reaction is N-terminal N-formyl-L-methionyl-[peptide] + H2O = N-terminal L-methionyl-[peptide] + formate. Removes the formyl group from the N-terminal Met of newly synthesized proteins. Requires at least a dipeptide for an efficient rate of reaction. N-terminal L-methionine is a prerequisite for activity but the enzyme has broad specificity at other positions. The sequence is that of Peptide deformylase 2 from Bacillus cereus (strain ATCC 14579 / DSM 31 / CCUG 7414 / JCM 2152 / NBRC 15305 / NCIMB 9373 / NCTC 2599 / NRRL B-3711).